The chain runs to 79 residues: UPF0154 protein SSP1415 (79 aa).

The chain crosses the membrane as a helical span at residues 4–24 (WLAIVLIVLALILGLVGGFFL).

Belongs to the UPF0154 family.

The protein localises to the membrane. This Staphylococcus saprophyticus subsp. saprophyticus (strain ATCC 15305 / DSM 20229 / NCIMB 8711 / NCTC 7292 / S-41) protein is UPF0154 protein SSP1415.